Reading from the N-terminus, the 56-residue chain is PI-stichotoxin-Hcr2a (56 aa).

Positions Cys4–Cys54 constitute a BPTI/Kunitz inhibitor domain. Intrachain disulfides connect Cys4–Cys54, Cys13–Cys37, and Cys29–Cys50.

This sequence belongs to the venom Kunitz-type family. Sea anemone type 2 potassium channel toxin subfamily.

Its subcellular location is the secreted. It is found in the nematocyst. Its function is as follows. Serine protease inhibitor that acts on trypsin. The polypeptide is PI-stichotoxin-Hcr2a (Radianthus crispa (Leathery sea anemone)).